Here is a 295-residue protein sequence, read N- to C-terminus: UDP-N-acetylenolpyruvoylglucosamine reductase (295 aa).

The region spanning 24 to 188 (KVGGNAEIFF…LKVVFKINKG (165 aa)) is the FAD-binding PCMH-type domain. Arg168 is a catalytic residue. Ser217 serves as the catalytic Proton donor. Residue Glu287 is part of the active site.

Belongs to the MurB family. It depends on FAD as a cofactor.

It localises to the cytoplasm. It catalyses the reaction UDP-N-acetyl-alpha-D-muramate + NADP(+) = UDP-N-acetyl-3-O-(1-carboxyvinyl)-alpha-D-glucosamine + NADPH + H(+). Its pathway is cell wall biogenesis; peptidoglycan biosynthesis. In terms of biological role, cell wall formation. The chain is UDP-N-acetylenolpyruvoylglucosamine reductase from Rickettsia peacockii (strain Rustic).